A 297-amino-acid polypeptide reads, in one-letter code: Protein LRATD1 (297 aa).

Serine 38 carries the phosphoserine modification. Residues 138–233 (PAPEPPAPAP…CRFGKREFKA (96 aa)) form the LRAT domain.

This sequence belongs to the LRATD family.

Its subcellular location is the cytoplasm. May play a role in cell morphology and motility. The polypeptide is Protein LRATD1 (LRATD1) (Bos taurus (Bovine)).